A 407-amino-acid polypeptide reads, in one-letter code: Expansin-like protein 2 (407 aa).

A signal peptide spans Met1–Ser23. The region spanning His42–Asn141 is the Expansin-like EG45 domain. 2 cysteine pairs are disulfide-bonded: Cys45/Cys75 and Cys78/Cys136. Asn70, Asn117, and Asn387 each carry an N-linked (GlcNAc...) asparagine glycan.

Belongs to the expansin family. Expansin A subfamily.

The protein resides in the secreted. Unlikely to encode with a protein with expansin activity. The sequence is that of Expansin-like protein 2 (expl2) from Dictyostelium discoideum (Social amoeba).